The following is a 347-amino-acid chain: Eukaryotic translation initiation factor 3 subunit H (347 aa).

The MPN domain maps to 6-149 (VCIDSSVALK…PSSTGPQGHT (144 aa)). Residues 136-155 (SDTDPSSTGPQGHTTTTPSG) form a disordered region. Residues 138–155 (TDPSSTGPQGHTTTTPSG) show a composition bias toward polar residues.

This sequence belongs to the eIF-3 subunit H family. In terms of assembly, component of the eukaryotic translation initiation factor 3 (eIF-3) complex.

The protein resides in the cytoplasm. Component of the eukaryotic translation initiation factor 3 (eIF-3) complex, which is involved in protein synthesis of a specialized repertoire of mRNAs and, together with other initiation factors, stimulates binding of mRNA and methionyl-tRNAi to the 40S ribosome. The eIF-3 complex specifically targets and initiates translation of a subset of mRNAs involved in cell proliferation. The sequence is that of Eukaryotic translation initiation factor 3 subunit H from Yarrowia lipolytica (strain CLIB 122 / E 150) (Yeast).